The sequence spans 323 residues: tRNA U34 carboxymethyltransferase (323 aa).

Residues lysine 91, tryptophan 105, lysine 110, glycine 130, 152-154, 181-182, methionine 196, tyrosine 200, and arginine 315 each bind carboxy-S-adenosyl-L-methionine; these read DPS and IE.

This sequence belongs to the class I-like SAM-binding methyltransferase superfamily. CmoB family. Homotetramer.

The catalysed reaction is carboxy-S-adenosyl-L-methionine + 5-hydroxyuridine(34) in tRNA = 5-carboxymethoxyuridine(34) in tRNA + S-adenosyl-L-homocysteine + H(+). Functionally, catalyzes carboxymethyl transfer from carboxy-S-adenosyl-L-methionine (Cx-SAM) to 5-hydroxyuridine (ho5U) to form 5-carboxymethoxyuridine (cmo5U) at position 34 in tRNAs. This Vibrio parahaemolyticus serotype O3:K6 (strain RIMD 2210633) protein is tRNA U34 carboxymethyltransferase.